A 509-amino-acid chain; its full sequence is Zinc finger protein CKR1 (509 aa).

The KRAB domain maps to 1–61; sequence MEPYVLLDPR…GSEEPQTHPP (61 aa). Composition is skewed to basic and acidic residues over residues 41-50 and 98-112; these read EDAVGLKEDA and PKRDGVKPSRVRDRP. The tract at residues 41–114 is disordered; the sequence is EDAVGLKEDA…PSRVRDRPFG (74 aa). C2H2-type zinc fingers lie at residues 113–135, 141–163, 169–191, 197–219, 225–247, 279–303, 303–325, 331–353, 359–383, 387–409, and 415–437; these read FGCPDCGKSFPWASHLERHRRVH, YSCPECGESYSQSSHLVQHRRTH, HKCQHCGKPFAGAAQLLAHSRGH, HRCGDCGKGFVWASHLERHRRVH, YECPECGEAFSQGSHLTKHRRSH, QRCAECGKAFRAAPPLRRHRRERSH, HRCGDCGKGFAWASHLQRHRRVH, FPCGLCGERFSQKAHLLQHGKTH, YKCGDCGKRFENAPPFLAHRRGHAA, and FTCGDCGKGFAWASHLQRHRRVH. The interval 428–479 is disordered; that stretch reads SHLTKHRRSHGPKAPLLPVQGRGEAGEPLRASPLSSGAEQRDGRRAQRGGVE.

It belongs to the krueppel C2H2-type zinc-finger protein family.

It is found in the nucleus. The protein is Zinc finger protein CKR1 of Gallus gallus (Chicken).